The chain runs to 184 residues: MKLLLPLLLLLCLELTLVCIHAEESSSMERNFNVEQISGYWFSIAEASYEREKIEEHGSMRAFVENITVLENSLVFKFHLIVNEECTEMTAIGEQTEKAGIYYMNYDGFNTFSILKTDYDNYIMIHLINKKDGKTFQLMELYGREPDLSLDIKEKFAKLCEEHGIIRENIIDLTNVNRCLEARE.

The N-terminal stretch at 1 to 22 (MKLLLPLLLLLCLELTLVCIHA) is a signal peptide. A glycan (N-linked (GlcNAc...) asparagine) is linked at N66. A disulfide bridge connects residues C86 and C179.

This sequence belongs to the calycin superfamily. Lipocalin family. Post-translationally, glycosylated. As to expression, abundant in the urine of adult male mice but absent from that of females.

It localises to the secreted. Binds pheromones that are released from drying urine of males. These pheromones affect the sexual behavior of females. The chain is Major urinary protein 3 (Mup3) from Mus musculus (Mouse).